An 811-amino-acid chain; its full sequence is Probable disease resistance protein At5g04720 (811 aa).

The RPW8 domain maps to 1–147 (MADIIGGEVV…KVDSLNEKLG (147 aa)). NB-ARC domains lie at 180 to 242 (VGLD…VSQS) and 312 to 437 (TYDV…NVLV). 207 to 214 (GMSGSGKT) contacts ATP. LRR repeat units follow at residues 650 to 674 (FPKL…ICGI), 676 to 699 (SLNS…SKLK), 700 to 722 (ALQL…ICEL), 724 to 746 (RLKY…IGKV), and 748 to 769 (TLEK…VVLL).

It belongs to the disease resistance NB-LRR family.

Functionally, probable disease resistance protein. In Arabidopsis thaliana (Mouse-ear cress), this protein is Probable disease resistance protein At5g04720.